A 683-amino-acid chain; its full sequence is U4/U6 small nuclear ribonucleoprotein Prp3 (683 aa).

The PWI domain occupies 1 to 87 (MALSKRELDE…HSKSSSDRSR (87 aa)). A compositionally biased stretch (basic and acidic residues) spans 73 to 107 (GRSSRHSKSSSDRSRKRELKEVFGDDSEISKESSG). The tract at residues 73–135 (GRSSRHSKSS…IPGPPSESPG (63 aa)) is disordered. Lys139 participates in a covalent cross-link: Glycyl lysine isopeptide (Lys-Gly) (interchain with G-Cter in SUMO2). Positions 153-183 (IEERKKQLSFISPPTPQPKTPSSSQPERLPI) are disordered. A Phosphoserine modification is found at Ser164. A Phosphothreonine modification is found at Thr167. Glycyl lysine isopeptide (Lys-Gly) (interchain with G-Cter in SUMO2) cross-links involve residues Lys244 and Lys252. The mediates interaction with SART3 stretch occupies residues 416–550 (NLVEHPAQLN…VHISVYRVRN (135 aa)). Ser619 carries the post-translational modification Phosphoserine.

As to quaternary structure, component of the precatalytic spliceosome (spliceosome B complex). Component of the U4/U6-U5 tri-snRNP complex, a building block of the precatalytic spliceosome (spliceosome B complex). The U4/U6-U5 tri-snRNP complex is composed of the U4, U6 and U5 snRNAs and at least PRPF3, PRPF4, PRPF6, PRPF8, PRPF31, SNRNP200, TXNL4A, SNRNP40, SNRPB, SNRPD1, SNRPD2, SNRPD3, SNRPE, SNRPF, SNRPG, DDX23, CD2BP2, PPIH, SNU13, EFTUD2, SART1 and USP39, plus LSM2, LSM3, LSM4, LSM5, LSM6, LSM7 and LSM8. Interacts directly with PRPF4. Part of a heteromeric complex containing PPIH, PRPF3 and PRPF4 that is stable in the absence of RNA. Interacts with SART3; the interaction is direct and recruits the deubiquitinase USP4 to PRPF3. Interacts with PRPF19. Interacts ('Lys-63'-linked polyubiquitinated) with PRPF8 (via the MPN (JAB/Mov34) domain); may stabilize the U4/U6-U5 tri-snRNP complex. Interacts with ERCC6. In terms of processing, ubiquitinated. Undergoes 'Lys-63'-linked polyubiquitination by PRPF19 and deubiquitination by USP4. 'Lys-63'-linked ubiquitination increases the affinity for PRPF8 and may regulate the assembly of the U4/U6-U5 tri-snRNP complex. Highly expressed in retina, liver, kidney and blood. Detected at lower levels in heart and brain.

It localises to the nucleus. Its subcellular location is the nucleus speckle. Plays a role in pre-mRNA splicing as component of the U4/U6-U5 tri-snRNP complex that is involved in spliceosome assembly, and as component of the precatalytic spliceosome (spliceosome B complex). This Homo sapiens (Human) protein is U4/U6 small nuclear ribonucleoprotein Prp3 (PRPF3).